Consider the following 275-residue polypeptide: Trans-aconitate 2-methyltransferase (275 aa).

The protein belongs to the methyltransferase superfamily. Tam family.

The protein localises to the cytoplasm. The catalysed reaction is trans-aconitate + S-adenosyl-L-methionine = (E)-3-(methoxycarbonyl)pent-2-enedioate + S-adenosyl-L-homocysteine. Catalyzes the S-adenosylmethionine monomethyl esterification of trans-aconitate. This chain is Trans-aconitate 2-methyltransferase, found in Pseudomonas paraeruginosa (strain DSM 24068 / PA7) (Pseudomonas aeruginosa (strain PA7)).